A 133-amino-acid polypeptide reads, in one-letter code: NAD(P)H-quinone oxidoreductase subunit 3 (133 aa).

3 helical membrane passes run Tyr-22–Leu-44, Met-77–Val-97, and Leu-102–Ala-122.

The protein belongs to the complex I subunit 3 family. As to quaternary structure, NDH-1 can be composed of about 15 different subunits; different subcomplexes with different compositions have been identified which probably have different functions.

It localises to the cellular thylakoid membrane. It catalyses the reaction a plastoquinone + NADH + (n+1) H(+)(in) = a plastoquinol + NAD(+) + n H(+)(out). The enzyme catalyses a plastoquinone + NADPH + (n+1) H(+)(in) = a plastoquinol + NADP(+) + n H(+)(out). Its function is as follows. NDH-1 shuttles electrons from an unknown electron donor, via FMN and iron-sulfur (Fe-S) centers, to quinones in the respiratory and/or the photosynthetic chain. The immediate electron acceptor for the enzyme in this species is believed to be plastoquinone. Couples the redox reaction to proton translocation, and thus conserves the redox energy in a proton gradient. Cyanobacterial NDH-1 also plays a role in inorganic carbon-concentration. The polypeptide is NAD(P)H-quinone oxidoreductase subunit 3 (Synechococcus sp. (strain ATCC 27144 / PCC 6301 / SAUG 1402/1) (Anacystis nidulans)).